The primary structure comprises 471 residues: 6-phosphofructo-2-kinase/fructose-2,6-bisphosphatase 1 (471 aa).

Serine 2 bears the N-acetylserine mark. Positions 2-250 (SQEMGELTQT…VYYLMNIHVT (249 aa)) are 6-phosphofructo-2-kinase. Serine 33 carries the phosphoserine; by PKA modification. An ATP-binding site is contributed by 49–57 (GLPARGKTY). Beta-D-fructose 6-phosphate contacts are provided by arginine 82 and arginine 105. Aspartate 131 is a catalytic residue. Residues threonine 133 and arginine 139 each contribute to the beta-D-fructose 6-phosphate site. Position 141 is a phosphoserine (serine 141). Residue cysteine 161 is part of the active site. 170–175 (NIRQVK) provides a ligand contact to ATP. Residues lysine 175, arginine 196, and tyrosine 200 each coordinate beta-D-fructose 6-phosphate. The tract at residues 251–471 (PRSIYLCRHG…EALDTVPAHY (221 aa)) is fructose-2,6-bisphosphatase. Arginine 258 is a beta-D-fructose 2,6-bisphosphate binding site. The active-site Tele-phosphohistidine intermediate is the histidine 259. Residues asparagine 265, glycine 271, and arginine 308 each contribute to the beta-D-fructose 2,6-bisphosphate site. The active-site Proton donor/acceptor is the glutamate 328. Residues tyrosine 339, arginine 353, lysine 357, tyrosine 368, glutamine 394, and arginine 398 each coordinate beta-D-fructose 2,6-bisphosphate. Residue 350 to 353 (FALR) participates in ATP binding. ATP-binding positions include 394–398 (QAVMR) and tyrosine 430.

This sequence in the C-terminal section; belongs to the phosphoglycerate mutase family. In terms of assembly, homodimer. As to expression, liver.

The catalysed reaction is beta-D-fructose 2,6-bisphosphate + H2O = beta-D-fructose 6-phosphate + phosphate. It carries out the reaction beta-D-fructose 6-phosphate + ATP = beta-D-fructose 2,6-bisphosphate + ADP + H(+). Phosphorylation at Ser-33 inhibits the kinase and activates the bisphosphatase. Functionally, synthesis and degradation of fructose 2,6-bisphosphate. The chain is 6-phosphofructo-2-kinase/fructose-2,6-bisphosphatase 1 from Bos taurus (Bovine).